Reading from the N-terminus, the 103-residue chain is Large ribosomal subunit protein uL24 (103 aa).

It belongs to the universal ribosomal protein uL24 family. Part of the 50S ribosomal subunit.

One of two assembly initiator proteins, it binds directly to the 5'-end of the 23S rRNA, where it nucleates assembly of the 50S subunit. Its function is as follows. One of the proteins that surrounds the polypeptide exit tunnel on the outside of the subunit. In Geobacillus stearothermophilus (Bacillus stearothermophilus), this protein is Large ribosomal subunit protein uL24.